The chain runs to 41 residues: trp operon leader peptide (41 aa).

Its function is as follows. This protein is involved in control of the biosynthesis of tryptophan. In Vibrio parahaemolyticus serotype O3:K6 (strain RIMD 2210633), this protein is trp operon leader peptide (trpL).